The chain runs to 663 residues: UvrABC system protein B (663 aa).

Residues Met1–Phe10 are compositionally biased toward basic and acidic residues. The interval Met1–Pro23 is disordered. The Helicase ATP-binding domain maps to Asp31 to Glu271. Position 44–51 (Gly44–Thr51) interacts with ATP. The short motif at Tyr97–Val120 is the Beta-hairpin element. A Helicase C-terminal domain is found at Gln435–Ile601. The 36-residue stretch at Lys627–Met662 folds into the UVR domain.

This sequence belongs to the UvrB family. Forms a heterotetramer with UvrA during the search for lesions. Interacts with UvrC in an incision complex.

It localises to the cytoplasm. The UvrABC repair system catalyzes the recognition and processing of DNA lesions. A damage recognition complex composed of 2 UvrA and 2 UvrB subunits scans DNA for abnormalities. Upon binding of the UvrA(2)B(2) complex to a putative damaged site, the DNA wraps around one UvrB monomer. DNA wrap is dependent on ATP binding by UvrB and probably causes local melting of the DNA helix, facilitating insertion of UvrB beta-hairpin between the DNA strands. Then UvrB probes one DNA strand for the presence of a lesion. If a lesion is found the UvrA subunits dissociate and the UvrB-DNA preincision complex is formed. This complex is subsequently bound by UvrC and the second UvrB is released. If no lesion is found, the DNA wraps around the other UvrB subunit that will check the other stand for damage. The chain is UvrABC system protein B from Streptococcus pyogenes serotype M4 (strain MGAS10750).